We begin with the raw amino-acid sequence, 585 residues long: MGRIIRVTGPLVVADGMKGAKMYEVVRVGEMGLIGEIIRLEGDKAVIQVYEETAGIRPGEPVEGTGSSLSVELGPGLLTSMYDGIQRPLDVLRQLSGDFIARGLTAPALPRDKKWHFTPKVKVGDKVVGGDILGVVPETSIIEHKILVPPWVEGEIVEIAEEGDYTVEEVIVKVKKPDGTIEELKMYHRWPVRVKRPYKQKLPPEVPLITGQRTIDTFFSQAKGGTAAIPGPFGSGKTVTQHQLAKWSDAQVVVYIGCGERGNEMTDVLEEFPKLKDPKTGKPLMERTVLIANTSNMPVAAREASIYTGITIAEYFRDQGYDVALMADSTSRWAEALREISGRLEEMPGEEGYPAYLASKIAEFYERAGRVITLGSDERVGSVSVIGAVSPPGGDFSEPVVQNTLRVVKVFWALDADLARRRHFPAINWLRSYSLYVDAIQDWWHKNVDPEWRKMRDTAMALLQKEAELQEIVRIVGPDALPDREKAILIVTRMLREDYLQQDAFDEVDTYCPPKKQVTMMRVILNFYEKTMQAVDRGVPVDEIAKLPVREKIGRMKFEPDVEKVRALIDETNQQFEELFKKYGA.

231–238 (GPFGSGKT) provides a ligand contact to ATP.

This sequence belongs to the ATPase alpha/beta chains family. As to quaternary structure, has multiple subunits with at least A(3), B(3), C, D, E, F, H, I and proteolipid K(x).

Its subcellular location is the cell membrane. It carries out the reaction ATP + H2O + 4 H(+)(in) = ADP + phosphate + 5 H(+)(out). Produces ATP from ADP in the presence of a proton gradient across the membrane. The archaeal alpha chain is a catalytic subunit. In terms of biological role, component of the A-type ATP synthase that produces ATP from ADP in the presence of a proton gradient across the membrane. The A chain is the catalytic subunit. This Thermococcus sp. (strain KI) protein is A-type ATP synthase subunit A.